The sequence spans 124 residues: Holo-[acyl-carrier-protein] synthase (124 aa).

Mg(2+)-binding residues include Asp8 and Glu56.

It belongs to the P-Pant transferase superfamily. AcpS family. Requires Mg(2+) as cofactor.

The protein resides in the cytoplasm. It catalyses the reaction apo-[ACP] + CoA = holo-[ACP] + adenosine 3',5'-bisphosphate + H(+). Its function is as follows. Transfers the 4'-phosphopantetheine moiety from coenzyme A to a Ser of acyl-carrier-protein. The chain is Holo-[acyl-carrier-protein] synthase from Clostridium acetobutylicum (strain ATCC 824 / DSM 792 / JCM 1419 / IAM 19013 / LMG 5710 / NBRC 13948 / NRRL B-527 / VKM B-1787 / 2291 / W).